The chain runs to 502 residues: Glycerol kinase (502 aa).

Residue threonine 16 participates in ADP binding. ATP-binding residues include threonine 16, threonine 17, and serine 18. Threonine 16 contacts sn-glycerol 3-phosphate. Arginine 20 lines the ADP pocket. Residues arginine 86, glutamate 87, tyrosine 138, and aspartate 247 each contribute to the sn-glycerol 3-phosphate site. Positions 86, 87, 138, 247, and 248 each coordinate glycerol. Threonine 269 and glycine 312 together coordinate ADP. Residues threonine 269, glycine 312, glutamine 316, and glycine 413 each coordinate ATP. ADP-binding residues include glycine 413 and asparagine 417.

It belongs to the FGGY kinase family.

It catalyses the reaction glycerol + ATP = sn-glycerol 3-phosphate + ADP + H(+). Its pathway is polyol metabolism; glycerol degradation via glycerol kinase pathway; sn-glycerol 3-phosphate from glycerol: step 1/1. With respect to regulation, inhibited by fructose 1,6-bisphosphate (FBP). In terms of biological role, key enzyme in the regulation of glycerol uptake and metabolism. Catalyzes the phosphorylation of glycerol to yield sn-glycerol 3-phosphate. This is Glycerol kinase from Dechloromonas aromatica (strain RCB).